We begin with the raw amino-acid sequence, 936 residues long: Bifunctional uridylyltransferase/uridylyl-removing enzyme (936 aa).

The segment at 1–372 is uridylyltransferase; sequence MTIPRIRQPR…SIATLLMRKR (372 aa). Positions 373 to 727 are uridylyl-removing; it reads NLGDFVLDGG…VLPDPERAVS (355 aa). The HD domain maps to 488-610; the sequence is TDEHTIRAIG…VQSVERLHLL (123 aa). 2 ACT domains span residues 728 to 809 and 840 to 915; these read EVLV…KALR and VIEI…TVPR. The span at 915–930 shows a compositional bias: basic and acidic residues; it reads RKVEEGAEQGAEKADA. The interval 915 to 936 is disordered; sequence RKVEEGAEQGAEKADAGEIVAA.

Belongs to the GlnD family. Requires Mg(2+) as cofactor.

It catalyses the reaction [protein-PII]-L-tyrosine + UTP = [protein-PII]-uridylyl-L-tyrosine + diphosphate. It carries out the reaction [protein-PII]-uridylyl-L-tyrosine + H2O = [protein-PII]-L-tyrosine + UMP + H(+). With respect to regulation, uridylyltransferase (UTase) activity is inhibited by glutamine, while glutamine activates uridylyl-removing (UR) activity. Its function is as follows. Modifies, by uridylylation and deuridylylation, the PII regulatory proteins (GlnB and homologs), in response to the nitrogen status of the cell that GlnD senses through the glutamine level. Under low glutamine levels, catalyzes the conversion of the PII proteins and UTP to PII-UMP and PPi, while under higher glutamine levels, GlnD hydrolyzes PII-UMP to PII and UMP (deuridylylation). Thus, controls uridylylation state and activity of the PII proteins, and plays an important role in the regulation of nitrogen fixation and metabolism. This Rhodospirillum rubrum (strain ATCC 11170 / ATH 1.1.1 / DSM 467 / LMG 4362 / NCIMB 8255 / S1) protein is Bifunctional uridylyltransferase/uridylyl-removing enzyme.